We begin with the raw amino-acid sequence, 287 residues long: Neuferricin homolog (287 aa).

The signal sequence occupies residues 1–22 (MFGLLRHLFKFQFLFVVAAVLG). The region spanning 61–146 (GTLFTPAELA…KPDDLIGLAG (86 aa)) is the Cytochrome b5 heme-binding domain. The stretch at 175–204 (YHHKFLELLEQARDAKRQVEELRARYPGCN) forms a coiled coil.

This sequence belongs to the cytochrome b5 family. MAPR subfamily.

The protein resides in the secreted. Its function is as follows. Heme-binding protein. The protein is Neuferricin homolog of Drosophila melanogaster (Fruit fly).